The sequence spans 254 residues: Triosephosphate isomerase (254 aa).

12–14 (NWK) is a substrate binding site. H99 acts as the Electrophile in catalysis. The active-site Proton acceptor is E169. Substrate contacts are provided by residues G175, S214, and 235 to 236 (GG).

Belongs to the triosephosphate isomerase family. As to quaternary structure, homodimer.

It is found in the cytoplasm. It catalyses the reaction D-glyceraldehyde 3-phosphate = dihydroxyacetone phosphate. It participates in carbohydrate biosynthesis; gluconeogenesis. The protein operates within carbohydrate degradation; glycolysis; D-glyceraldehyde 3-phosphate from glycerone phosphate: step 1/1. In terms of biological role, involved in the gluconeogenesis. Catalyzes stereospecifically the conversion of dihydroxyacetone phosphate (DHAP) to D-glyceraldehyde-3-phosphate (G3P). This Bartonella henselae (strain ATCC 49882 / DSM 28221 / CCUG 30454 / Houston 1) (Rochalimaea henselae) protein is Triosephosphate isomerase.